We begin with the raw amino-acid sequence, 494 residues long: Keratin, type I cytoskeletal 12 (494 aa).

Residues 1–12 are compositionally biased toward polar residues; that stretch reads MDLSNNTMSLSV. A disordered region spans residues 1-32; that stretch reads MDLSNNTMSLSVRTPGLSRRLSSQSVIGRPRG. The tract at residues 1-124 is head; it reads MDLSNNTMSL…GNDGGLLSGS (124 aa). A coil 1A region spans residues 125 to 160; the sequence is EKETMQNLNDRLASYLDKVRALEEANTELENKIREW. The region spanning 125–440 is the IF rod domain; it reads EKETMQNLND…RLLDGEAQGD (316 aa). Residues 164 to 182 are linker 1; sequence RGTGTADASQSDYSKYYPL. The segment at 183-274 is coil 1B; the sequence is IEDLRNKIIS…KNHEDELQSF (92 aa). The interval 275 to 297 is linker 12; the sequence is RVGGPGEVSVEMDAAPGVDLTRL. Residues 298 to 435 form a coil 2 region; the sequence is LNDMRAQYET…IETYRRLLDG (138 aa). Residues 436–494 form a tail region; it reads EAQGDGLEESLFVTDSKSQAQSTDSSKDPTKTRKIKTVVQEMVNGEVVSSQVQEIEELM. Residues 446–468 form a disordered region; the sequence is LFVTDSKSQAQSTDSSKDPTKTR. The span at 448–459 shows a compositional bias: polar residues; it reads VTDSKSQAQSTD.

This sequence belongs to the intermediate filament family. Heterotetramer of two type I and two type II keratins. Keratin-3 associates with keratin-12. Expressed in the corneal epithelium (at protein level).

In terms of biological role, involved in corneal epithelium organization, integrity and corneal keratin expression. This is Keratin, type I cytoskeletal 12 (KRT12) from Homo sapiens (Human).